The chain runs to 79 residues: RNA-binding protein Hfq (79 aa).

The region spanning 10–69 (DPFLNALRKEHVPVSIYLVNGIKLQGNIESFDQYVVLLRNTVTQMVYKHAISTVVPARPV) is the Sm domain.

It belongs to the Hfq family. In terms of assembly, homohexamer.

In terms of biological role, RNA chaperone that binds small regulatory RNA (sRNAs) and mRNAs to facilitate mRNA translational regulation in response to envelope stress, environmental stress and changes in metabolite concentrations. Also binds with high specificity to tRNAs. This is RNA-binding protein Hfq from Burkholderia cenocepacia (strain HI2424).